The primary structure comprises 100 residues: Protein RADIALIS-like 1 (100 aa).

In terms of domain architecture, SANT spans 9–64 (QSSGSWTAKQNKAFEQALATYDQDTPNRWQNVAKVVGGKTTEEVKRHYELLVQDIN). A disordered region spans residues 73-100 (FPNYRTSGGCTNGRLSQEEKRMRNMRLQ). A compositionally biased stretch (polar residues) spans 76–87 (YRTSGGCTNGRL).

It is found in the nucleus. Functionally, probable transcription factor. The protein is Protein RADIALIS-like 1 (RL1) of Arabidopsis thaliana (Mouse-ear cress).